The primary structure comprises 350 residues: tRNA N6-adenosine threonylcarbamoyltransferase (350 aa).

Fe cation-binding residues include His-115 and His-119. Residues 137–141 (IISGG), Asp-170, Gly-183, and Asn-281 contribute to the substrate site. A Fe cation-binding site is contributed by Asp-309.

This sequence belongs to the KAE1 / TsaD family. Fe(2+) is required as a cofactor.

Its subcellular location is the cytoplasm. It catalyses the reaction L-threonylcarbamoyladenylate + adenosine(37) in tRNA = N(6)-L-threonylcarbamoyladenosine(37) in tRNA + AMP + H(+). Functionally, required for the formation of a threonylcarbamoyl group on adenosine at position 37 (t(6)A37) in tRNAs that read codons beginning with adenine. Is involved in the transfer of the threonylcarbamoyl moiety of threonylcarbamoyl-AMP (TC-AMP) to the N6 group of A37, together with TsaE and TsaB. TsaD likely plays a direct catalytic role in this reaction. The protein is tRNA N6-adenosine threonylcarbamoyltransferase of Ehrlichia canis (strain Jake).